Here is a 336-residue protein sequence, read N- to C-terminus: Probable allantoicase 2 (336 aa).

It belongs to the allantoicase family.

The enzyme catalyses allantoate + H2O = (S)-ureidoglycolate + urea. The protein operates within nitrogen metabolism; (S)-allantoin degradation; (S)-ureidoglycolate from allantoate (aminidohydrolase route): step 1/1. The polypeptide is Probable allantoicase 2 (Burkholderia pseudomallei (strain K96243)).